A 217-amino-acid chain; its full sequence is 3,4-dihydroxy-2-butanone 4-phosphate synthase (217 aa).

Residues 37–38 (RE), Asp42, 150–154 (RRGHT), and Glu174 each bind D-ribulose 5-phosphate. Glu38 contacts Mg(2+). His153 lines the Mg(2+) pocket.

Belongs to the DHBP synthase family. As to quaternary structure, homodimer. It depends on Mg(2+) as a cofactor. Requires Mn(2+) as cofactor.

It catalyses the reaction D-ribulose 5-phosphate = (2S)-2-hydroxy-3-oxobutyl phosphate + formate + H(+). The protein operates within cofactor biosynthesis; riboflavin biosynthesis; 2-hydroxy-3-oxobutyl phosphate from D-ribulose 5-phosphate: step 1/1. Its function is as follows. Catalyzes the conversion of D-ribulose 5-phosphate to formate and 3,4-dihydroxy-2-butanone 4-phosphate. In Shewanella sp. (strain W3-18-1), this protein is 3,4-dihydroxy-2-butanone 4-phosphate synthase.